A 220-amino-acid chain; its full sequence is Glutathione S-transferase-like protein FUS3 (220 aa).

Residues 3–84 (SFGTLYTYMP…YVAQSGPQAS (82 aa)) enclose the GST N-terminal domain. Residues 90–220 (DAMSSAKIRQ…LIEKRRIGAK (131 aa)) enclose the GST C-terminal domain.

It belongs to the GST superfamily.

Functionally, glutathione S-transferase-like protein; part of the gene cluster that mediates the biosynthesis of the mycotoxin fusarin C. Within the cluster, FUS1, FUS2, FUS8 and FUS9 are sufficient for fusarin production. The other FUS cluster members are not essential for fusarin C biosynthesis. This chain is Glutathione S-transferase-like protein FUS3, found in Gibberella moniliformis (strain M3125 / FGSC 7600) (Maize ear and stalk rot fungus).